Reading from the N-terminus, the 199-residue chain is dITP/XTP pyrophosphatase (199 aa).

8–13 (THNRNK) lines the substrate pocket. The active-site Proton acceptor is the Asp-68. Mg(2+) is bound at residue Asp-68. Residues Ser-69, 151 to 154 (HGYD), Lys-174, and 179 to 180 (HR) each bind substrate.

The protein belongs to the HAM1 NTPase family. Homodimer. Mg(2+) serves as cofactor.

The enzyme catalyses XTP + H2O = XMP + diphosphate + H(+). It catalyses the reaction dITP + H2O = dIMP + diphosphate + H(+). The catalysed reaction is ITP + H2O = IMP + diphosphate + H(+). Its function is as follows. Pyrophosphatase that catalyzes the hydrolysis of nucleoside triphosphates to their monophosphate derivatives, with a high preference for the non-canonical purine nucleotides XTP (xanthosine triphosphate), dITP (deoxyinosine triphosphate) and ITP. Seems to function as a house-cleaning enzyme that removes non-canonical purine nucleotides from the nucleotide pool, thus preventing their incorporation into DNA/RNA and avoiding chromosomal lesions. The sequence is that of dITP/XTP pyrophosphatase from Leifsonia xyli subsp. xyli (strain CTCB07).